A 127-amino-acid chain; its full sequence is Large ribosomal subunit protein bL17 (127 aa).

The protein belongs to the bacterial ribosomal protein bL17 family. Part of the 50S ribosomal subunit. Contacts protein L32.

The sequence is that of Large ribosomal subunit protein bL17 from Leuconostoc mesenteroides subsp. mesenteroides (strain ATCC 8293 / DSM 20343 / BCRC 11652 / CCM 1803 / JCM 6124 / NCDO 523 / NBRC 100496 / NCIMB 8023 / NCTC 12954 / NRRL B-1118 / 37Y).